A 31-amino-acid chain; its full sequence is Cyclotide hyen-J (31 aa).

A cross-link (cyclopeptide (Gly-Asp)) is located at residues 1–31 (GSVPCGESCVWIPCITSIAGCSCSNKVCYMD). Intrachain disulfides connect C5-C21, C9-C23, and C14-C28.

This is a cyclic peptide. As to expression, detected in seeds (at protein level).

Functionally, probably participates in a plant defense mechanism. This chain is Cyclotide hyen-J, found in Pigea enneasperma (Spade flower).